Consider the following 211-residue polypeptide: Thioredoxin domain-containing protein 9 homolog (211 aa).

The Thioredoxin domain maps to Tyr-68–Val-178. Positions Glu-184–Ser-203 are enriched in polar residues. The segment at Glu-184–Glu-211 is disordered.

In Arabidopsis thaliana (Mouse-ear cress), this protein is Thioredoxin domain-containing protein 9 homolog.